We begin with the raw amino-acid sequence, 180 residues long: MASSIMSSAAVATRSNGAQASMVAPFTGLKSNASFPVSRKTNLDITSIASNGGRVRCMQVWPPINMKKYETLSYLPDLSSEQLLSEIEYLLKNGWVPCLEFETEHGFVYREHTSSPGYYDGRYWTMWKLPMFGCTDATQVAAEVQEAKKAYPDAHIRIIGFDNVRQVQCISFIAYKPEAF.

The N-terminal 56 residues, 1-56, are a transit peptide targeting the chloroplast; the sequence is MASSIMSSAAVATRSNGAQASMVAPFTGLKSNASFPVSRKTNLDITSIASNGGRVR.

The protein belongs to the RuBisCO small chain family. Heterohexadecamer of 8 large and 8 small subunits.

It is found in the plastid. It localises to the chloroplast. Its function is as follows. RuBisCO catalyzes two reactions: the carboxylation of D-ribulose 1,5-bisphosphate, the primary event in carbon dioxide fixation, as well as the oxidative fragmentation of the pentose substrate. Both reactions occur simultaneously and in competition at the same active site. Although the small subunit is not catalytic it is essential for maximal activity. The polypeptide is Ribulose bisphosphate carboxylase small subunit, chloroplastic (Stellaria longipes (Longstalk starwort)).